Consider the following 436-residue polypeptide: Cytokine receptor-like factor 3 (436 aa).

Residues 9 to 87 are a coiled coil; it reads LMQEAWESID…VSAIEQENIK (79 aa). Positions 177–270 constitute a Fibronectin type-III domain; it reads PPVQIEELIE…LQTSRTTLVP (94 aa).

This sequence belongs to the cytokine receptor-like factor 3 family.

The protein localises to the cytoplasm. May play a role in the negative regulation of cell cycle progression. In Xenopus laevis (African clawed frog), this protein is Cytokine receptor-like factor 3 (crlf3).